The following is a 152-amino-acid chain: Superoxide dismutase [Cu-Zn] (152 aa).

3 residues coordinate Cu cation: His-44, His-46, and His-61. Zn(2+) contacts are provided by His-61, His-69, His-78, and Asp-81. His-118 is a Cu cation binding site.

The protein belongs to the Cu-Zn superoxide dismutase family. In terms of assembly, homodimer. It depends on Cu cation as a cofactor. The cofactor is Zn(2+).

It is found in the cytoplasm. The enzyme catalyses 2 superoxide + 2 H(+) = H2O2 + O2. Functionally, destroys radicals which are normally produced within the cells and which are toxic to biological systems. The chain is Superoxide dismutase [Cu-Zn] from Drosophila pseudoobscura pseudoobscura (Fruit fly).